Here is a 257-residue protein sequence, read N- to C-terminus: Type III pantothenate kinase (257 aa).

An ATP-binding site is contributed by 11 to 18; the sequence is DSGNTAIK. Residues Tyr96 and 103–106 each bind substrate; that span reads GCDR. The active-site Proton acceptor is Asp105. Asp125 contributes to the K(+) binding site. Thr128 contributes to the ATP binding site. Thr179 lines the substrate pocket.

The protein belongs to the type III pantothenate kinase family. As to quaternary structure, homodimer. The cofactor is NH4(+). It depends on K(+) as a cofactor.

It is found in the cytoplasm. It catalyses the reaction (R)-pantothenate + ATP = (R)-4'-phosphopantothenate + ADP + H(+). The protein operates within cofactor biosynthesis; coenzyme A biosynthesis; CoA from (R)-pantothenate: step 1/5. Its function is as follows. Catalyzes the phosphorylation of pantothenate (Pan), the first step in CoA biosynthesis. The chain is Type III pantothenate kinase from Nitrosomonas eutropha (strain DSM 101675 / C91 / Nm57).